Here is a 629-residue protein sequence, read N- to C-terminus: 5-aminolevulinate synthase, mitochondrial (629 aa).

A mitochondrion-targeting transit peptide spans 1-69 (MDSVLRQSKA…VQSARTGGRA (69 aa)). Positions 155, 268, and 287 each coordinate substrate. Residues serine 320, histidine 348, and threonine 388 each coordinate pyridoxal 5'-phosphate. Lysine 391 is an active-site residue. Lysine 391 is subject to N6-(pyridoxal phosphate)lysine. Pyridoxal 5'-phosphate-binding residues include threonine 420 and threonine 421. A substrate-binding site is contributed by threonine 506.

Belongs to the class-II pyridoxal-phosphate-dependent aminotransferase family. Homodimer. It depends on pyridoxal 5'-phosphate as a cofactor.

The protein localises to the mitochondrion matrix. The catalysed reaction is succinyl-CoA + glycine + H(+) = 5-aminolevulinate + CO2 + CoA. It participates in porphyrin-containing compound metabolism; protoporphyrin-IX biosynthesis; 5-aminolevulinate from glycine: step 1/1. Functionally, catalyzes the synthesis of 5-aminolevulinate (ALA) from succinyl-CoA and glycine, the first and rate-limiting step in heme biosynthesis. This is 5-aminolevulinate synthase, mitochondrial (alv-1) from Neurospora crassa (strain ATCC 24698 / 74-OR23-1A / CBS 708.71 / DSM 1257 / FGSC 987).